The primary structure comprises 531 residues: Chaperonin GroEL, chloroplastic (531 aa).

Residues 30 to 33, 87 to 91, Gly-415, 481 to 483, and Asp-497 contribute to the ATP site; these read TLGP, DGTTT, and NAA.

It belongs to the chaperonin (HSP60) family. Forms a cylinder of 14 subunits composed of two heptameric rings stacked back-to-back. Interacts with the co-chaperonin GroES.

Its subcellular location is the plastid. It localises to the chloroplast. The enzyme catalyses ATP + H2O + a folded polypeptide = ADP + phosphate + an unfolded polypeptide.. Functionally, together with its co-chaperonin GroES, plays an essential role in assisting protein folding. The GroEL-GroES system forms a nano-cage that allows encapsulation of the non-native substrate proteins and provides a physical environment optimized to promote and accelerate protein folding. This is Chaperonin GroEL, chloroplastic from Emiliania huxleyi (Coccolithophore).